Consider the following 684-residue polypeptide: Extracellular lipase (684 aa).

The first 48 residues, Met-1–Ala-48, serve as a signal peptide directing secretion. 2 disordered regions span residues Ser-321–Gly-405 and Gln-462–Ser-493. Residues Ala-385–Gly-405 are compositionally biased toward basic and acidic residues. Residue Ser-568 is the Nucleophile of the active site.

Belongs to the AB hydrolase superfamily. Lipase family. Monomer.

Its subcellular location is the secreted. The catalysed reaction is a triacylglycerol + H2O = a diacylglycerol + a fatty acid + H(+). Its function is as follows. The optimum chain lengths for the acyl moiety is C6 for ester hydrolysis and C6 and C8 for triacylglycerol hydrolysis. This is Extracellular lipase from Aeromonas hydrophila.